We begin with the raw amino-acid sequence, 443 residues long: Exodeoxyribonuclease 7 large subunit (443 aa).

The protein belongs to the XseA family. Heterooligomer composed of large and small subunits.

Its subcellular location is the cytoplasm. It carries out the reaction Exonucleolytic cleavage in either 5'- to 3'- or 3'- to 5'-direction to yield nucleoside 5'-phosphates.. In terms of biological role, bidirectionally degrades single-stranded DNA into large acid-insoluble oligonucleotides, which are then degraded further into small acid-soluble oligonucleotides. The protein is Exodeoxyribonuclease 7 large subunit of Vibrio vulnificus (strain YJ016).